We begin with the raw amino-acid sequence, 198 residues long: DnaJ homolog subfamily C member 5 (198 aa).

Residues Ser-8, Ser-10, Ser-12, and Ser-15 each carry the phosphoserine modification. The region spanning 13-82 (GESLYHVLGL…RNIYDKYGSL (70 aa)) is the J domain. Tyr-17 is subject to Phosphotyrosine. Position 56 is an N6-acetyllysine (Lys-56). Ser-151 is modified (phosphoserine).

Homodimer. Interacts with the chaperone complex consisting of HSC70 and SGTA. Interacts with ZDHHC13 (via ANK repeats). Interacts with ZDHHC17 (via ANK repeats). Interacts with SYT1, SYT5 and SYT7, and with SYT9, forming a complex with SNAP25. The interaction with SYT9 is stimulated tenfold in presence of calcium. In terms of processing, formation of the chaperone complex DNAJC5/HSC70 is not regulated by phosphorylation. Ser-10 phosphorylation induces an order-to-disorder transition triggering the interaction with Lys-58. This conformational switch modulates DNAJC5's cellular functions by reducing binding to syntaxin and synaptogamin without altering HSC70 interactions. Post-translationally, palmitoylated. Could be palmitoylated by DHHC3, DHHC7, DHHC15 and DHHC17. Palmitoylation occurs probably in the cysteine-rich domain and regulates DNAJC5 membrane attachment.

It is found in the cytoplasm. It localises to the cytosol. The protein localises to the membrane. The protein resides in the cytoplasmic vesicle. Its subcellular location is the secretory vesicle. It is found in the chromaffin granule membrane. It localises to the melanosome. The protein localises to the cell membrane. Acts as a co-chaperone for the SNARE protein SNAP-25. Involved in the calcium-mediated control of a late stage of exocytosis. Acts as a general chaperone in regulated exocytosis. May have an important role in presynaptic function. May be involved in calcium-dependent neurotransmitter release at nerve endings. In Mus musculus (Mouse), this protein is DnaJ homolog subfamily C member 5.